The primary structure comprises 306 residues: UDP-3-O-acyl-N-acetylglucosamine deacetylase (306 aa).

Residues His79, His239, and Asp243 each contribute to the Zn(2+) site. His266 serves as the catalytic Proton donor.

This sequence belongs to the LpxC family. Zn(2+) is required as a cofactor.

It catalyses the reaction a UDP-3-O-[(3R)-3-hydroxyacyl]-N-acetyl-alpha-D-glucosamine + H2O = a UDP-3-O-[(3R)-3-hydroxyacyl]-alpha-D-glucosamine + acetate. Its pathway is glycolipid biosynthesis; lipid IV(A) biosynthesis; lipid IV(A) from (3R)-3-hydroxytetradecanoyl-[acyl-carrier-protein] and UDP-N-acetyl-alpha-D-glucosamine: step 2/6. Functionally, catalyzes the hydrolysis of UDP-3-O-myristoyl-N-acetylglucosamine to form UDP-3-O-myristoylglucosamine and acetate, the committed step in lipid A biosynthesis. The chain is UDP-3-O-acyl-N-acetylglucosamine deacetylase from Glaesserella parasuis serovar 5 (strain SH0165) (Haemophilus parasuis).